Consider the following 391-residue polypeptide: Casein kinase II subunit alpha (391 aa).

Residues 36-41 (QDDYQL) form an interaction with beta subunit region. The Protein kinase domain occupies 39 to 324 (YQLVRKLGRG…AREAMEHPYF (286 aa)). ATP contacts are provided by residues 45-53 (LGRGKYSEV) and Lys68. Asp156 serves as the catalytic Proton acceptor. Residues Thr344 and Thr360 each carry the phosphothreonine; by CDK1 modification. Residues Ser362 and Ser370 each carry the phosphoserine; by CDK1 modification.

It belongs to the protein kinase superfamily. Ser/Thr protein kinase family. CK2 subfamily. As to quaternary structure, heterotetramer composed of two catalytic subunits (alpha chain and/or alpha' chain) and two regulatory subunits (beta chains). The tetramer can exist as a combination of 2 alpha/2 beta, 2 alpha'/2 beta or 1 alpha/1 alpha'/2 beta subunits. Also part of a CK2-SPT16-SSRP1 complex composed of SSRP1, SUPT16H, CSNK2A1, CSNK2A2 and CSNK2B, which forms following UV irradiation. Interacts with RNPS1. Interacts with SNAI1. Interacts with PML. Interacts with CCAR2. Interacts with HIRIP3. In terms of processing, phosphorylated at Thr-344, Thr-360, Ser-362 and Ser-370 by CDK1 in prophase and metaphase and dephosphorylated during anaphase. Phosphorylation does not directly affect casein kinase 2 activity, but may contribute to its regulation by forming binding sites for interacting proteins and/or targeting it to different compartments.

Its subcellular location is the nucleus. The enzyme catalyses L-seryl-[protein] + ATP = O-phospho-L-seryl-[protein] + ADP + H(+). It catalyses the reaction L-threonyl-[protein] + ATP = O-phospho-L-threonyl-[protein] + ADP + H(+). With respect to regulation, constitutively active protein kinase whose activity is not directly affected by phosphorylation. Seems to be regulated by level of expression and localization. Catalytic subunit of a constitutively active serine/threonine-protein kinase complex that phosphorylates a large number of substrates containing acidic residues C-terminal to the phosphorylated serine or threonine. Regulates numerous cellular processes, such as cell cycle progression, apoptosis and transcription, as well as viral infection. May act as a regulatory node which integrates and coordinates numerous signals leading to an appropriate cellular response. During mitosis, functions as a component of the p53/TP53-dependent spindle assembly checkpoint (SAC) that maintains cyclin-B-CDK1 activity and G2 arrest in response to spindle damage. Also required for p53/TP53-mediated apoptosis, phosphorylating 'Ser-392' of p53/TP53 following UV irradiation. Phosphorylates a number of DNA repair proteins in response to DNA damage, such as MDC1, MRE11, RAD9A, RAD51 and HTATSF1, promoting their recruitment to DNA damage sites. Can also negatively regulate apoptosis. Phosphorylates the caspases CASP9 and CASP2 and the apoptotic regulator NOL3. Phosphorylation protects CASP9 from cleavage and activation by CASP8, and inhibits the dimerization of CASP2 and activation of CASP8. Phosphorylates YY1, protecting YY1 from cleavage by CASP7 during apoptosis. Regulates transcription by direct phosphorylation of RNA polymerases I, II, III and IV. Also phosphorylates and regulates numerous transcription factors including NF-kappa-B, STAT1, CREB1, IRF1, IRF2, ATF1, ATF4, SRF, MAX, JUN, FOS, MYC and MYB. Phosphorylates Hsp90 and its co-chaperones FKBP4 and CDC37, which is essential for chaperone function. Mediates sequential phosphorylation of FNIP1, promoting its gradual interaction with Hsp90, leading to activate both kinase and non-kinase client proteins of Hsp90. Regulates Wnt signaling by phosphorylating CTNNB1 and the transcription factor LEF1. Acts as an ectokinase that phosphorylates several extracellular proteins. Phosphorylates PML at 'Ser-565' and primes it for ubiquitin-mediated degradation. Plays an important role in the circadian clock function by phosphorylating BMAL1 at 'Ser-90' which is pivotal for its interaction with CLOCK and which controls CLOCK nuclear entry. Phosphorylates FMR1, promoting FMR1-dependent formation of a membraneless compartment. May phosphorylate histone H2A on 'Ser-1'. This Rattus norvegicus (Rat) protein is Casein kinase II subunit alpha (Csnk2a1).